A 315-amino-acid chain; its full sequence is Protoheme IX farnesyltransferase 1 (315 aa).

Transmembrane regions (helical) follow at residues 25 to 45 (PGIIFGNLISVAGGFLLAAKG), 49 to 69 (LALMLASLVGLSLVVASGCAV), 87 to 107 (RVTVTGEIAVGNVLAFGLALG), 120 to 139 (ALALLFAVIGYIVYVGVYSL), 145 to 165 (SVYGTLVGSFSGAVPPVVGYC), 176 to 196 (AILLLMFSLWQMPHSYAIAIF), 220 to 240 (LHIVLYIAVFALVSALLPLAG), 242 to 262 (TGIAFMAVTCATSLWWLAMAL), and 280 to 300 (GFSIITIMALSITMALDSQVI).

It belongs to the UbiA prenyltransferase family. Protoheme IX farnesyltransferase subfamily.

The protein localises to the cell inner membrane. The catalysed reaction is heme b + (2E,6E)-farnesyl diphosphate + H2O = Fe(II)-heme o + diphosphate. It functions in the pathway porphyrin-containing compound metabolism; heme O biosynthesis; heme O from protoheme: step 1/1. In terms of biological role, converts heme B (protoheme IX) to heme O by substitution of the vinyl group on carbon 2 of heme B porphyrin ring with a hydroxyethyl farnesyl side group. The polypeptide is Protoheme IX farnesyltransferase 1 (Shewanella sp. (strain W3-18-1)).